A 340-amino-acid chain; its full sequence is uncharacterized protein (340 aa).

It is found in the virion. This is an uncharacterized protein from Acanthamoeba polyphaga (Amoeba).